A 235-amino-acid polypeptide reads, in one-letter code: MVEEIMKSEEQKLIDVNKHRGVRSDGEEDEQLEEGEIVGGDADTLSSSSSSRPGTAIAQHPLEHSWTFWFDTPSAKSKQVAWGSSMRPIYTFSSVEEFWSLYNNIHRPSKLAQGADFYCFKNKIEPKWEDPVCANGGKWTMTFTKAKSDTCWLYTLLAMIGEQFDHGDDICGAVVNVRARQEKIALWTKNAANESAQLSIGKQWKEFIDYNDTIGFIFHEDAKTLDRSAKNKYTV.

Positions 16 to 25 (VNKHRGVRSD) are enriched in basic and acidic residues. The tract at residues 16–56 (VNKHRGVRSDGEEDEQLEEGEIVGGDADTLSSSSSSRPGTA) is disordered. The segment covering 26–36 (GEEDEQLEEGE) has biased composition (acidic residues). EIF4G-binding stretches follow at residues 60–63 (HPLE) and 70–106 (FDTPSAKSKQVAWGSSMRPIYTFSSVEEFWSLYNNIH). MRNA-binding positions include 78–83 (KQVAWG), Lys-110, and 128–129 (WE). The cysteines at positions 133 and 171 are disulfide-linked. Residues 154 to 163 (YTLLAMIGEQ) form an EIF4G-binding region. MRNA contacts are provided by residues 178 to 183 (RARQEK) and 223 to 227 (KTLDR).

The protein belongs to the eukaryotic initiation factor 4E family. In terms of assembly, EIF4F is a multi-subunit complex, the composition of which varies with external and internal environmental conditions. It is composed of at least EIF4A, EIF4E and EIF4G. EIF4E is also known to interact with other partners. In higher plants two isoforms of EIF4F have been identified, named isoform EIF4F and isoform EIF(iso)4F. Isoform EIF4F has subunits p220 and p26, whereas isoform EIF(iso)4F has subunits p82 and p28. As to quaternary structure, (Microbial infection) Interacts with potyvirus viral genome-linked protein (VPg); this interaction is possible in susceptible hosts but impaired in resistant plants. According to the redox status, the Cys-133-Cys-171 disulfide bridge may have a role in regulating protein function by affecting its ability to bind capped mRNA.

It localises to the nucleus. It is found in the cytoplasm. Functionally, component of the protein complex eIF4F, which is involved in the recognition of the mRNA cap, ATP-dependent unwinding of 5'-terminal secondary structure and recruitment of mRNA to the ribosome. Recognizes and binds the 7-methylguanosine-containing mRNA cap during an early step in the initiation of protein synthesis and facilitates ribosome binding by inducing the unwinding of the mRNAs secondary structures. Key component of recessive resistance to potyviruses. In terms of biological role, (Microbial infection) Susceptibility host factor required for viral infection by recruiting viral RNAs to the host ribosomal complex via an interaction with viral genome-linked protein (VPg). In Lactuca sativa (Garden lettuce), this protein is Eukaryotic translation initiation factor 4E-1.